The following is a 1382-amino-acid chain: Hepatocyte growth factor receptor (1382 aa).

Positions 1 to 24 (MKPPTVHIPGIVVLLFTLVQRSSE) are cleaved as a signal peptide. Over 25–933 (ECREALRRSG…VIVLPDQNFT (909 aa)) the chain is Extracellular. A Sema domain is found at 27-516 (REALRRSGTD…TGKKITKIPL (490 aa)). N-linked (GlcNAc...) asparagine glycans are attached at residues Asn-38, Asn-49, and Asn-99. Intrachain disulfides connect Cys-94–Cys-100, Cys-97–Cys-160, Cys-133–Cys-141, and Cys-173–Cys-176. Asn-203 and Asn-359 each carry an N-linked (GlcNAc...) asparagine glycan. Disulfide bonds link Cys-299–Cys-364 and Cys-386–Cys-398. Asn-400, Asn-406, Asn-450, and Asn-495 each carry an N-linked (GlcNAc...) asparagine glycan. Intrachain disulfides connect Cys-521-Cys-539, Cys-527-Cys-562, Cys-530-Cys-546, and Cys-542-Cys-552. 3 consecutive IPT/TIG domains span residues 564 to 656 (PTIF…FSYV), 658 to 740 (PKIT…FIYK), and 743 to 837 (PVIH…LIYV). Thr-583 carries an O-linked (Man) threonine glycan. 3 N-linked (GlcNAc...) asparagine glycosylation sites follow: Asn-608, Asn-616, and Asn-636. 2 O-linked (Man) threonine glycosylation sites follow: Thr-677 and Thr-762. N-linked (GlcNAc...) asparagine glycans are attached at residues Asn-769, Asn-786, Asn-880, and Asn-931. A helical membrane pass occupies residues 934-956 (GLIAGVASISVLLLLFLGLFLWM). At 957-1382 (KKKKQIKDLG…QDAPDRVVDT (426 aa)) the chain is on the cytoplasmic side. At Ser-967 the chain carries Phosphoserine. Residue Thr-978 is modified to Phosphothreonine. Phosphoserine is present on residues Ser-991, Ser-998, and Ser-1001. Tyr-1004 carries the post-translational modification Phosphotyrosine. The 268-residue stretch at 1079–1346 (VHFTEIIGRG…KIAVIFSTFI (268 aa)) folds into the Protein kinase domain. ATP is bound by residues 1085-1093 (IGRGHFGCV) and Lys-1111. Asp-1205 acts as the Proton acceptor in catalysis. Residues 1213–1382 (LDEKFTVKVA…QDAPDRVVDT (170 aa)) form an interaction with RANBP9 region. The residue at position 1231 (Tyr-1231) is a Phosphotyrosine. Phosphotyrosine; by autocatalysis is present on residues Tyr-1235 and Tyr-1236. At Thr-1290 the chain carries Phosphothreonine. The interaction with MUC20 stretch occupies residues 1321 to 1360 (WHPNAEMRPSFSELVSKIAVIFSTFIGEHYVHVNATYVNV). 2 positions are modified to phosphotyrosine; by autocatalysis: Tyr-1350 and Tyr-1357. Position 1366 is a phosphotyrosine (Tyr-1366).

Belongs to the protein kinase superfamily. Tyr protein kinase family. In terms of assembly, heterodimer made of an alpha chain (50 kDa) and a beta chain (145 kDa) which are disulfide linked. Binds PLXNB1. Interacts when phosphorylated with downstream effectors including STAT3, PIK3R1, SRC, PCLG1, GRB2 and GAB1. Interacts with SPSB1, SPSB2 and SPSB4. Interacts with INPP5D/SHIP1. When phosphorylated at Tyr-1357, interacts with INPPL1/SHIP2. Interacts with RANBP9 and RANBP10, as well as SPSB1, SPSB2, SPSB3 and SPSB4. SPSB1 binding occurs in the presence and in the absence of HGF, however HGF treatment has a positive effect on this interaction. Interacts with MUC20; prevents interaction with GRB2 and suppresses hepatocyte growth factor-induced cell proliferation. Interacts with GRB10. Interacts with PTPN1 and PTPN2. Interacts with HSP90AA1 and HSP90AB1; the interaction suppresses MET kinase activity. Interacts with tensin TNS3. Interacts (when phosphorylated) with tensin TNS4 (via SH2 domain); the interaction increases MET protein stability by inhibiting MET endocytosis and subsequent lysosomal degradation. Post-translationally, autophosphorylated in response to ligand binding on Tyr-1235 and Tyr-1236 in the kinase domain leading to further phosphorylation of Tyr-1350 and Tyr-1357 in the C-terminal multifunctional docking site. Dephosphorylated by PTPRJ at Tyr-1350 and Tyr-1366. Dephosphorylated by PTPN1 and PTPN2. Ubiquitinated. Ubiquitination by CBL regulates the receptor stability and activity through proteasomal degradation. In terms of processing, O-mannosylation of IPT/TIG domains by TMEM260 is required for protein maturation. O-mannosylated residues are composed of single mannose glycans that are not elongated or modified.

Its subcellular location is the membrane. It carries out the reaction L-tyrosyl-[protein] + ATP = O-phospho-L-tyrosyl-[protein] + ADP + H(+). In its inactive state, the C-terminal tail interacts with the catalytic domain and inhibits the kinase activity. Upon ligand binding, the C-terminal tail is displaced and becomes phosphorylated, thus increasing the kinase activity. In terms of biological role, receptor tyrosine kinase that transduces signals from the extracellular matrix into the cytoplasm by binding to hepatocyte growth factor/HGF ligand. Regulates many physiological processes including proliferation, scattering, morphogenesis and survival. Ligand binding at the cell surface induces autophosphorylation of MET on its intracellular domain that provides docking sites for downstream signaling molecules. Following activation by ligand, interacts with the PI3-kinase subunit PIK3R1, PLCG1, SRC, GRB2, STAT3 or the adapter GAB1. Recruitment of these downstream effectors by MET leads to the activation of several signaling cascades including the RAS-ERK, PI3 kinase-AKT, or PLCgamma-PKC. The RAS-ERK activation is associated with the morphogenetic effects while PI3K/AKT coordinates prosurvival effects. During embryonic development, MET signaling plays a role in gastrulation, development and migration of muscles and neuronal precursors, angiogenesis and kidney formation. In adults, participates in wound healing as well as organ regeneration and tissue remodeling. Also promotes differentiation and proliferation of hematopoietic cells. The protein is Hepatocyte growth factor receptor (MET) of Ornithorhynchus anatinus (Duckbill platypus).